A 326-amino-acid polypeptide reads, in one-letter code: D-alanine--D-alanine ligase (326 aa).

Positions 114–313 (KRVWLQHGLR…YAELCVSIVS (200 aa)) constitute an ATP-grasp domain. 140–195 (PDRLGLPLILKPPHEGSTVGITKVAGYSDMKEGYAQAAKFDDEVLAEQFIAGRELT) is an ATP binding site. Mg(2+) is bound by residues Asp267, Glu280, and Asn282.

The protein belongs to the D-alanine--D-alanine ligase family. Requires Mg(2+) as cofactor. The cofactor is Mn(2+).

The protein localises to the cytoplasm. It catalyses the reaction 2 D-alanine + ATP = D-alanyl-D-alanine + ADP + phosphate + H(+). It functions in the pathway cell wall biogenesis; peptidoglycan biosynthesis. Its function is as follows. Cell wall formation. The chain is D-alanine--D-alanine ligase from Bordetella petrii (strain ATCC BAA-461 / DSM 12804 / CCUG 43448).